The chain runs to 158 residues: Transcription elongation factor GreA (158 aa).

A coiled-coil region spans residues 4 to 75 (QKQYPMTQEG…QRVENMLRNA (72 aa)).

This sequence belongs to the GreA/GreB family.

Its function is as follows. Necessary for efficient RNA polymerase transcription elongation past template-encoded arresting sites. The arresting sites in DNA have the property of trapping a certain fraction of elongating RNA polymerases that pass through, resulting in locked ternary complexes. Cleavage of the nascent transcript by cleavage factors such as GreA or GreB allows the resumption of elongation from the new 3'terminus. GreA releases sequences of 2 to 3 nucleotides. The chain is Transcription elongation factor GreA from Staphylococcus saprophyticus subsp. saprophyticus (strain ATCC 15305 / DSM 20229 / NCIMB 8711 / NCTC 7292 / S-41).